A 278-amino-acid chain; its full sequence is tRNA (guanine-N(7)-)-methyltransferase (278 aa).

The tract at residues 1 to 42 (MRHDGPMHVQPGVGLQSDTSSSTGTGSGPADEPEAEKSAWGY) is disordered. 4 residues coordinate S-adenosyl-L-methionine: Glu106, Glu131, Asn160, and Asp183. The active site involves Asp183. Substrate is bound by residues Lys187, Asp219, and 256–259 (TKYE).

Belongs to the class I-like SAM-binding methyltransferase superfamily. TrmB family.

It catalyses the reaction guanosine(46) in tRNA + S-adenosyl-L-methionine = N(7)-methylguanosine(46) in tRNA + S-adenosyl-L-homocysteine. The protein operates within tRNA modification; N(7)-methylguanine-tRNA biosynthesis. Catalyzes the formation of N(7)-methylguanine at position 46 (m7G46) in tRNA. The polypeptide is tRNA (guanine-N(7)-)-methyltransferase (Mycobacterium ulcerans (strain Agy99)).